We begin with the raw amino-acid sequence, 323 residues long: Beta-ketoacyl-[acyl-carrier-protein] synthase III (323 aa).

Catalysis depends on residues cysteine 113 and histidine 250. Residues 251–255 (QANKR) are ACP-binding. The active site involves asparagine 280.

The protein belongs to the thiolase-like superfamily. FabH family. In terms of assembly, homodimer.

It is found in the cytoplasm. It catalyses the reaction malonyl-[ACP] + acetyl-CoA + H(+) = 3-oxobutanoyl-[ACP] + CO2 + CoA. It functions in the pathway lipid metabolism; fatty acid biosynthesis. Catalyzes the condensation reaction of fatty acid synthesis by the addition to an acyl acceptor of two carbons from malonyl-ACP. Catalyzes the first condensation reaction which initiates fatty acid synthesis and may therefore play a role in governing the total rate of fatty acid production. Possesses both acetoacetyl-ACP synthase and acetyl transacylase activities. Its substrate specificity determines the biosynthesis of branched-chain and/or straight-chain of fatty acids. This Brucella anthropi (strain ATCC 49188 / DSM 6882 / CCUG 24695 / JCM 21032 / LMG 3331 / NBRC 15819 / NCTC 12168 / Alc 37) (Ochrobactrum anthropi) protein is Beta-ketoacyl-[acyl-carrier-protein] synthase III.